Reading from the N-terminus, the 173-residue chain is NADH-ubiquinone oxidoreductase chain 6 (173 aa).

5 consecutive transmembrane segments (helical) span residues 1-21, 27-47, 48-68, 87-107, and 139-159; these read MTYF…AVAS, YGVL…LSLG, VSFI…VVFV, VVIY…VGDF, and WGAG…FVVL.

Belongs to the complex I subunit 6 family.

The protein resides in the mitochondrion membrane. It catalyses the reaction a ubiquinone + NADH + 5 H(+)(in) = a ubiquinol + NAD(+) + 4 H(+)(out). Core subunit of the mitochondrial membrane respiratory chain NADH dehydrogenase (Complex I) that is believed to belong to the minimal assembly required for catalysis. Complex I functions in the transfer of electrons from NADH to the respiratory chain. The immediate electron acceptor for the enzyme is believed to be ubiquinone. The sequence is that of NADH-ubiquinone oxidoreductase chain 6 (MT-ND6) from Struthio camelus (Common ostrich).